The primary structure comprises 135 residues: Large ribosomal subunit protein eL32 (135 aa).

A Glycyl lysine isopeptide (Lys-Gly) (interchain with G-Cter in SUMO2) cross-link involves residue Lys-9. Residue Lys-50 is modified to N6-succinyllysine. A Phosphoserine modification is found at Ser-62.

The protein belongs to the eukaryotic ribosomal protein eL32 family. As to quaternary structure, component of the large ribosomal subunit.

It localises to the cytoplasm. Its function is as follows. Component of the large ribosomal subunit. The ribosome is a large ribonucleoprotein complex responsible for the synthesis of proteins in the cell. In Oryctolagus cuniculus (Rabbit), this protein is Large ribosomal subunit protein eL32 (RPL32).